We begin with the raw amino-acid sequence, 886 residues long: uncharacterized protein (886 aa).

The first 20 residues, 1–20, serve as a signal peptide directing secretion; the sequence is MKILKSLVLLVLFIVMPAKA. Transmembrane regions (helical) follow at residues 520–540, 563–583, 609–629, 647–667, 680–700, and 771–791; these read VIIF…IEVI, TYFF…VVGA, LLFI…IITI, IIAF…IILM, ISTL…FLLI, and FLVL…SYGL.

Belongs to the TrbL/VirB6 family.

The protein resides in the cell membrane. This is an uncharacterized protein from Rickettsia typhi (strain ATCC VR-144 / Wilmington).